The primary structure comprises 332 residues: Anthranilate phosphoribosyltransferase (332 aa).

5-phospho-alpha-D-ribose 1-diphosphate is bound by residues glycine 78, 81 to 82 (GD), serine 86, 88 to 91 (NIST), 106 to 114 (KHGNKSITS), and serine 118. Glycine 78 is a binding site for anthranilate. Serine 90 is a binding site for Mg(2+). Asparagine 109 lines the anthranilate pocket. Arginine 163 provides a ligand contact to anthranilate. The Mg(2+) site is built by aspartate 222 and glutamate 223.

The protein belongs to the anthranilate phosphoribosyltransferase family. Homodimer. Mg(2+) is required as a cofactor.

The enzyme catalyses N-(5-phospho-beta-D-ribosyl)anthranilate + diphosphate = 5-phospho-alpha-D-ribose 1-diphosphate + anthranilate. The protein operates within amino-acid biosynthesis; L-tryptophan biosynthesis; L-tryptophan from chorismate: step 2/5. Catalyzes the transfer of the phosphoribosyl group of 5-phosphorylribose-1-pyrophosphate (PRPP) to anthranilate to yield N-(5'-phosphoribosyl)-anthranilate (PRA). This chain is Anthranilate phosphoribosyltransferase, found in Staphylococcus aureus (strain USA300).